Here is a 596-residue protein sequence, read N- to C-terminus: Structural protein precursor VP8 (596 aa).

The protein resides in the virion. 120 subunits of the putative clamp protein VP8b appear to stabilize the capsid shell. The sequence is that of Structural protein precursor VP8 from Oryza latifolia (Indian wild rice).